The sequence spans 270 residues: uncharacterized protein (270 aa).

A signal peptide spans 1–22; it reads MEYIKKIALYMSVLLLIIFIGG. C23 carries the N-palmitoyl cysteine lipid modification. A lipid anchor (S-diacylglycerol cysteine) is attached at C23.

It belongs to the staphylococcal tandem lipoprotein family.

The protein localises to the cell membrane. This is an uncharacterized protein from Staphylococcus aureus (strain USA300).